A 358-amino-acid chain; its full sequence is UDP-N-acetylglucosamine--N-acetylmuramyl-(pentapeptide) pyrophosphoryl-undecaprenol N-acetylglucosamine transferase (358 aa).

Residues 11–13, Asn120, Arg161, Ser188, and Gln282 each bind UDP-N-acetyl-alpha-D-glucosamine; that span reads TGG.

Belongs to the glycosyltransferase 28 family. MurG subfamily.

It is found in the cell inner membrane. The enzyme catalyses di-trans,octa-cis-undecaprenyl diphospho-N-acetyl-alpha-D-muramoyl-L-alanyl-D-glutamyl-meso-2,6-diaminopimeloyl-D-alanyl-D-alanine + UDP-N-acetyl-alpha-D-glucosamine = di-trans,octa-cis-undecaprenyl diphospho-[N-acetyl-alpha-D-glucosaminyl-(1-&gt;4)]-N-acetyl-alpha-D-muramoyl-L-alanyl-D-glutamyl-meso-2,6-diaminopimeloyl-D-alanyl-D-alanine + UDP + H(+). Its pathway is cell wall biogenesis; peptidoglycan biosynthesis. In terms of biological role, cell wall formation. Catalyzes the transfer of a GlcNAc subunit on undecaprenyl-pyrophosphoryl-MurNAc-pentapeptide (lipid intermediate I) to form undecaprenyl-pyrophosphoryl-MurNAc-(pentapeptide)GlcNAc (lipid intermediate II). The polypeptide is UDP-N-acetylglucosamine--N-acetylmuramyl-(pentapeptide) pyrophosphoryl-undecaprenol N-acetylglucosamine transferase (Synechococcus sp. (strain CC9902)).